The primary structure comprises 428 residues: 3-phosphoshikimate 1-carboxyvinyltransferase (428 aa).

3-phosphoshikimate-binding residues include lysine 20, serine 21, and arginine 25. Lysine 20 is a phosphoenolpyruvate binding site. Residues glycine 93 and arginine 122 each coordinate phosphoenolpyruvate. 3-phosphoshikimate-binding residues include serine 167, glutamine 169, aspartate 317, and lysine 344. Position 169 (glutamine 169) interacts with phosphoenolpyruvate. The active-site Proton acceptor is aspartate 317. Phosphoenolpyruvate is bound by residues arginine 348 and arginine 390.

It belongs to the EPSP synthase family. As to quaternary structure, monomer.

It localises to the cytoplasm. It catalyses the reaction 3-phosphoshikimate + phosphoenolpyruvate = 5-O-(1-carboxyvinyl)-3-phosphoshikimate + phosphate. It functions in the pathway metabolic intermediate biosynthesis; chorismate biosynthesis; chorismate from D-erythrose 4-phosphate and phosphoenolpyruvate: step 6/7. In terms of biological role, catalyzes the transfer of the enolpyruvyl moiety of phosphoenolpyruvate (PEP) to the 5-hydroxyl of shikimate-3-phosphate (S3P) to produce enolpyruvyl shikimate-3-phosphate and inorganic phosphate. The sequence is that of 3-phosphoshikimate 1-carboxyvinyltransferase from Leptospira biflexa serovar Patoc (strain Patoc 1 / ATCC 23582 / Paris).